A 166-amino-acid polypeptide reads, in one-letter code: uncharacterized protein (166 aa).

A run of 4 helical transmembrane segments spans residues 7 to 27, 30 to 50, 69 to 89, and 92 to 112; these read VLFK…SLFY, FLFA…YCYI, IETL…KSLL, and NSFF…LVLF.

To M.jannaschii MJ0795.1 and MJ0785.1.

It localises to the cell membrane. This is an uncharacterized protein from Methanocaldococcus jannaschii (strain ATCC 43067 / DSM 2661 / JAL-1 / JCM 10045 / NBRC 100440) (Methanococcus jannaschii).